The following is a 135-amino-acid chain: Mini-ribonuclease 3 (135 aa).

Residue Asp-17 is part of the active site.

Belongs to the MrnC RNase family. As to quaternary structure, homodimer. Mg(2+) serves as cofactor.

It is found in the cytoplasm. Functionally, involved in correct processing of both the 5' and 3' ends of 23S rRNA precursor. Processes 30S rRNA precursor transcript even in absence of ribonuclease 3 (Rnc); Rnc processes 30S rRNA into smaller rRNA precursors. The chain is Mini-ribonuclease 3 from Bacillus cereus (strain ATCC 14579 / DSM 31 / CCUG 7414 / JCM 2152 / NBRC 15305 / NCIMB 9373 / NCTC 2599 / NRRL B-3711).